The following is a 194-amino-acid chain: Peptidyl-tRNA hydrolase (194 aa).

TRNA is bound at residue Tyr17. His22 serves as the catalytic Proton acceptor. The tRNA site is built by Phe68, Asn70, and Asn116.

It belongs to the PTH family. Monomer.

It localises to the cytoplasm. The enzyme catalyses an N-acyl-L-alpha-aminoacyl-tRNA + H2O = an N-acyl-L-amino acid + a tRNA + H(+). Its function is as follows. Hydrolyzes ribosome-free peptidyl-tRNAs (with 1 or more amino acids incorporated), which drop off the ribosome during protein synthesis, or as a result of ribosome stalling. Catalyzes the release of premature peptidyl moieties from peptidyl-tRNA molecules trapped in stalled 50S ribosomal subunits, and thus maintains levels of free tRNAs and 50S ribosomes. This is Peptidyl-tRNA hydrolase from Shewanella woodyi (strain ATCC 51908 / MS32).